A 284-amino-acid polypeptide reads, in one-letter code: 1D-myo-inositol 2-acetamido-2-deoxy-alpha-D-glucopyranoside deacetylase (284 aa).

Residues His-12, Asp-15, and His-146 each contribute to the Zn(2+) site.

It belongs to the MshB deacetylase family. Zn(2+) serves as cofactor.

It catalyses the reaction 1D-myo-inositol 2-acetamido-2-deoxy-alpha-D-glucopyranoside + H2O = 1D-myo-inositol 2-amino-2-deoxy-alpha-D-glucopyranoside + acetate. Catalyzes the deacetylation of 1D-myo-inositol 2-acetamido-2-deoxy-alpha-D-glucopyranoside (GlcNAc-Ins) in the mycothiol biosynthesis pathway. This Mycolicibacterium vanbaalenii (strain DSM 7251 / JCM 13017 / BCRC 16820 / KCTC 9966 / NRRL B-24157 / PYR-1) (Mycobacterium vanbaalenii) protein is 1D-myo-inositol 2-acetamido-2-deoxy-alpha-D-glucopyranoside deacetylase.